Consider the following 212-residue polypeptide: External core antigen (212 aa).

Positions 1–19 (MQLFHLCLIISCSCPTVQA) are cleaved as a signal peptide. Positions 25 to 27 (GWL) are HBEAG. Residues 179–212 (RQRGRTIRRRTPSPRRRRSQSPRRRRSQSRESQC) are disordered. A compositionally biased stretch (basic residues) spans 180-205 (QRGRTIRRRTPSPRRRRSQSPRRRRS). Residues 184–190 (TIRRRTP) form a 1; half-length repeat. Residues 184-206 (TIRRRTPSPRRRRSQSPRRRRSQ) are 3 X 8 AA repeats of S-P-R-R-R-R-S-Q. Residues 184-212 (TIRRRTPSPRRRRSQSPRRRRSQSRESQC) constitute a propeptide that is removed on maturation. 2 repeat units span residues 191–198 (SPRRRRSQ) and 199–206 (SPRRRRSQ).

The protein belongs to the orthohepadnavirus precore antigen family. In terms of assembly, homodimerizes. In terms of processing, phosphorylated. Cleaved by host furin.

The protein localises to the secreted. Its subcellular location is the host nucleus. May regulate immune response to the intracellular capsid in acting as a T-cell tolerogen, by having an immunoregulatory effect which prevents destruction of infected cells by cytotoxic T-cells. This immune regulation may predispose to chronicity during perinatal infections and prevent severe liver injury during adult infections. This is External core antigen from Hepatitis B virus genotype D subtype ayw (isolate Australia/AustKW/1991) (HBV-D).